Here is a 200-residue protein sequence, read N- to C-terminus: Phospholipase A2 inhibitor LNF2 (200 aa).

A signal peptide spans 1–19 (MKSLHTICLLFIFVARGNS). Intrachain disulfides connect C22-C46, C25-C32, C39-C67, C73-C94, C95-C100, C118-C143, C136-C165, and C169-C191. N-linked (GlcNAc...) asparagine glycosylation occurs at N176.

It belongs to the CNF-like-inhibitor family. As to quaternary structure, occurs as a mixture of oligomers. Tetrameric arrangement appears to be the predominant quaternary structure. In terms of tissue distribution, expressed by the liver.

Its subcellular location is the secreted. Inhibits the enzymatic activity of phospholipase A2 (PA2). This chain is Phospholipase A2 inhibitor LNF2, found in Lachesis muta muta (Bushmaster).